We begin with the raw amino-acid sequence, 273 residues long: Tyrosinase (273 aa).

The signal sequence occupies residues 1-18 (MLLFTMGLLLAILQPSTG). N-linked (GlcNAc...) asparagine glycans are attached at residues N86, N111, and N161. H180, H202, and H211 together coordinate Cu cation. N-linked (GlcNAc...) asparagine glycosylation occurs at N230.

This sequence belongs to the tyrosinase family. Cu(2+) serves as cofactor.

It localises to the melanosome membrane. The protein resides in the melanosome. The enzyme catalyses 2 L-dopa + O2 = 2 L-dopaquinone + 2 H2O. It catalyses the reaction L-tyrosine + O2 = L-dopaquinone + H2O. Functionally, this is a copper-containing oxidase that functions in the formation of pigments such as melanins and other polyphenolic compounds. Catalyzes the initial and rate limiting step in the cascade of reactions leading to melanin production from tyrosine. In addition to hydroxylating tyrosine to DOPA (3,4-dihydroxyphenylalanine), also catalyzes the oxidation of DOPA to DOPA-quinone, and possibly the oxidation of DHI (5,6-dihydroxyindole) to indole-5,6 quinone. The sequence is that of Tyrosinase (TYR) from Coturnix japonica (Japanese quail).